The primary structure comprises 156 residues: 6,7-dimethyl-8-ribityllumazine synthase (156 aa).

5-amino-6-(D-ribitylamino)uracil contacts are provided by residues Phe22, 57–59 (AVE), and 81–83 (TVI). Residue 86–87 (GT) participates in (2S)-2-hydroxy-3-oxobutyl phosphate binding. His89 acts as the Proton donor in catalysis. 5-amino-6-(D-ribitylamino)uracil is bound at residue Phe114. Arg128 lines the (2S)-2-hydroxy-3-oxobutyl phosphate pocket.

Belongs to the DMRL synthase family. As to quaternary structure, forms an icosahedral capsid composed of 60 subunits, arranged as a dodecamer of pentamers.

The catalysed reaction is (2S)-2-hydroxy-3-oxobutyl phosphate + 5-amino-6-(D-ribitylamino)uracil = 6,7-dimethyl-8-(1-D-ribityl)lumazine + phosphate + 2 H2O + H(+). The protein operates within cofactor biosynthesis; riboflavin biosynthesis; riboflavin from 2-hydroxy-3-oxobutyl phosphate and 5-amino-6-(D-ribitylamino)uracil: step 1/2. Functionally, catalyzes the formation of 6,7-dimethyl-8-ribityllumazine by condensation of 5-amino-6-(D-ribitylamino)uracil with 3,4-dihydroxy-2-butanone 4-phosphate. This is the penultimate step in the biosynthesis of riboflavin. The chain is 6,7-dimethyl-8-ribityllumazine synthase from Vibrio campbellii (strain ATCC BAA-1116).